The chain runs to 255 residues: CDP-diacylglycerol pyrophosphatase (255 aa).

Residues L5–F27 traverse the membrane as a helical segment.

This sequence belongs to the Cdh family.

It localises to the cell inner membrane. It catalyses the reaction a CDP-1,2-diacyl-sn-glycerol + H2O = a 1,2-diacyl-sn-glycero-3-phosphate + CMP + 2 H(+). It functions in the pathway phospholipid metabolism; CDP-diacylglycerol degradation; phosphatidate from CDP-diacylglycerol: step 1/1. This chain is CDP-diacylglycerol pyrophosphatase, found in Cronobacter sakazakii (strain ATCC BAA-894) (Enterobacter sakazakii).